The chain runs to 326 residues: Flotillin-like protein FloA (326 aa).

A helical membrane pass occupies residues 3-23; that stretch reads FTTIVVILLVIACIVVLFFIG.

The protein belongs to the flotillin-like FloA family. As to quaternary structure, homooligomerizes.

It localises to the cell membrane. Its subcellular location is the membrane raft. Found in functional membrane microdomains (FMM) that may be equivalent to eukaryotic membrane rafts. FMMs are highly dynamic and increase in number as cells age. Flotillins are thought to be important factors in membrane fluidity. This chain is Flotillin-like protein FloA, found in Desulforapulum autotrophicum (strain ATCC 43914 / DSM 3382 / VKM B-1955 / HRM2) (Desulfobacterium autotrophicum).